Consider the following 129-residue polypeptide: Small ribosomal subunit protein uS11 (129 aa).

It belongs to the universal ribosomal protein uS11 family. In terms of assembly, part of the 30S ribosomal subunit. Interacts with proteins S7 and S18. Binds to IF-3.

In terms of biological role, located on the platform of the 30S subunit, it bridges several disparate RNA helices of the 16S rRNA. Forms part of the Shine-Dalgarno cleft in the 70S ribosome. In Methylorubrum populi (strain ATCC BAA-705 / NCIMB 13946 / BJ001) (Methylobacterium populi), this protein is Small ribosomal subunit protein uS11.